We begin with the raw amino-acid sequence, 448 residues long: Probable glycine dehydrogenase (decarboxylating) subunit 1 (448 aa).

This sequence belongs to the GcvP family. N-terminal subunit subfamily. In terms of assembly, the glycine cleavage system is composed of four proteins: P, T, L and H. In this organism, the P 'protein' is a heterodimer of two subunits.

The catalysed reaction is N(6)-[(R)-lipoyl]-L-lysyl-[glycine-cleavage complex H protein] + glycine + H(+) = N(6)-[(R)-S(8)-aminomethyldihydrolipoyl]-L-lysyl-[glycine-cleavage complex H protein] + CO2. Its function is as follows. The glycine cleavage system catalyzes the degradation of glycine. The P protein binds the alpha-amino group of glycine through its pyridoxal phosphate cofactor; CO(2) is released and the remaining methylamine moiety is then transferred to the lipoamide cofactor of the H protein. This chain is Probable glycine dehydrogenase (decarboxylating) subunit 1, found in Listeria monocytogenes serotype 4b (strain CLIP80459).